Here is a 130-residue protein sequence, read N- to C-terminus: Small ribosomal subunit protein uS11 (130 aa).

Belongs to the universal ribosomal protein uS11 family. In terms of assembly, part of the 30S ribosomal subunit. Interacts with proteins S7 and S18. Binds to IF-3.

Its function is as follows. Located on the platform of the 30S subunit, it bridges several disparate RNA helices of the 16S rRNA. Forms part of the Shine-Dalgarno cleft in the 70S ribosome. This chain is Small ribosomal subunit protein uS11, found in Shewanella violacea (strain JCM 10179 / CIP 106290 / LMG 19151 / DSS12).